Here is a 430-residue protein sequence, read N- to C-terminus: Adenylosuccinate synthetase (430 aa).

GTP contacts are provided by residues Gly-12–Lys-18 and Gly-40–Thr-42. The active-site Proton acceptor is the Asp-13. 2 residues coordinate Mg(2+): Asp-13 and Gly-40. IMP-binding positions include Asp-13–Lys-16, Asn-38–His-41, Thr-128, Arg-142, Gln-223, Thr-238, and Arg-302. His-41 functions as the Proton donor in the catalytic mechanism. Thr-298–Arg-304 contributes to the substrate binding site. GTP-binding positions include Arg-304, Cys-330 to Asp-332, and Ser-412 to Gly-414.

Belongs to the adenylosuccinate synthetase family. In terms of assembly, homodimer. The cofactor is Mg(2+).

It localises to the cytoplasm. It carries out the reaction IMP + L-aspartate + GTP = N(6)-(1,2-dicarboxyethyl)-AMP + GDP + phosphate + 2 H(+). Its pathway is purine metabolism; AMP biosynthesis via de novo pathway; AMP from IMP: step 1/2. In terms of biological role, plays an important role in the de novo pathway of purine nucleotide biosynthesis. Catalyzes the first committed step in the biosynthesis of AMP from IMP. This chain is Adenylosuccinate synthetase, found in Ligilactobacillus salivarius (strain UCC118) (Lactobacillus salivarius).